We begin with the raw amino-acid sequence, 457 residues long: GTPase Der (457 aa).

EngA-type G domains follow at residues 4–169 and 177–352; these read PTIA…PENN and IMMS…NQHR. Residues 10–17, 57–61, 120–123, 183–190, 230–234, and 295–298 contribute to the GTP site; these read GRPNVGKS, DTGGL, NKCE, DTAGI, and NKWD. The region spanning 353–438 is the KH-like domain; sequence RRVTTSVVNE…PLILLWRGKQ (86 aa).

The protein belongs to the TRAFAC class TrmE-Era-EngA-EngB-Septin-like GTPase superfamily. EngA (Der) GTPase family. In terms of assembly, associates with the 50S ribosomal subunit.

In terms of biological role, GTPase that plays an essential role in the late steps of ribosome biogenesis. The protein is GTPase Der of Prochlorococcus marinus (strain MIT 9215).